A 1344-amino-acid chain; its full sequence is Protein stu1 (1344 aa).

Residues 93 to 131 (LYPLLVERLGDHKERIRAQAAQSFTDMWLAAPEEVEQCV) form an HEAT 1 repeat. The disordered stretch occupies residues 265–292 (HRPVSRAETQASRSVSRLDTHQRPASRM). The HEAT 2 repeat unit spans residues 508–544 (VTFTTRILQHVSGACQDKNVQLRLFAAGWLKTLIQKQ). 5 disordered regions span residues 606–637 (RSLL…ANGT), 651–847 (AAQK…STPR), 914–945 (LTEN…ESVP), 984–1004 (PVTH…LSSS), and 1031–1054 (SLPH…PSQR). 2 stretches are compositionally biased toward polar residues: residues 691 to 705 (VRTV…SLSS) and 735 to 747 (ATDS…NQID). The segment covering 748–769 (GSPSAAKSKSSTPSLKSVSSTG) has biased composition (low complexity). Polar residues-rich tracts occupy residues 828-847 (FSVT…STPR) and 914-942 (LTEN…NQDE). The segment covering 995–1004 (SSKPSGLSSS) has biased composition (low complexity).

Belongs to the CLASP family. As to quaternary structure, interacts with microtubules.

The protein resides in the cytoplasm. Its subcellular location is the cytoskeleton. It localises to the nucleus. It is found in the spindle. Its function is as follows. Microtubule binding protein that promotes the stabilization of dynamic microtubules. Required for mitotic spindle formation. This is Protein stu1 (stu1) from Aspergillus fumigatus (strain ATCC MYA-4609 / CBS 101355 / FGSC A1100 / Af293) (Neosartorya fumigata).